Here is a 195-residue protein sequence, read N- to C-terminus: ATP-dependent Clp protease proteolytic subunit (195 aa).

The active-site Nucleophile is Ser98. Residue His123 is part of the active site.

Belongs to the peptidase S14 family. Fourteen ClpP subunits assemble into 2 heptameric rings which stack back to back to give a disk-like structure with a central cavity, resembling the structure of eukaryotic proteasomes.

The protein localises to the cytoplasm. The enzyme catalyses Hydrolysis of proteins to small peptides in the presence of ATP and magnesium. alpha-casein is the usual test substrate. In the absence of ATP, only oligopeptides shorter than five residues are hydrolyzed (such as succinyl-Leu-Tyr-|-NHMec, and Leu-Tyr-Leu-|-Tyr-Trp, in which cleavage of the -Tyr-|-Leu- and -Tyr-|-Trp bonds also occurs).. Cleaves peptides in various proteins in a process that requires ATP hydrolysis. Has a chymotrypsin-like activity. Plays a major role in the degradation of misfolded proteins. This Sulfurovum sp. (strain NBC37-1) protein is ATP-dependent Clp protease proteolytic subunit.